The sequence spans 433 residues: ATP-dependent protease ATPase subunit HslU (433 aa).

ATP is bound by residues Ile18, 60 to 65, Asp246, Glu311, and Arg383; that span reads GVGKTE.

Belongs to the ClpX chaperone family. HslU subfamily. In terms of assembly, a double ring-shaped homohexamer of HslV is capped on each side by a ring-shaped HslU homohexamer. The assembly of the HslU/HslV complex is dependent on binding of ATP.

The protein resides in the cytoplasm. Its function is as follows. ATPase subunit of a proteasome-like degradation complex; this subunit has chaperone activity. The binding of ATP and its subsequent hydrolysis by HslU are essential for unfolding of protein substrates subsequently hydrolyzed by HslV. HslU recognizes the N-terminal part of its protein substrates and unfolds these before they are guided to HslV for hydrolysis. The sequence is that of ATP-dependent protease ATPase subunit HslU from Cereibacter sphaeroides (strain KD131 / KCTC 12085) (Rhodobacter sphaeroides).